Reading from the N-terminus, the 366-residue chain is Probable S-adenosyl-L-methionine-binding protein AF_0433 (366 aa).

Residues 6-136 form the TsaA-like domain; the sequence is LRQVGVIRSP…YSSTIDSVGN (131 aa). S-adenosyl-L-methionine contacts are provided by residues 23–25, 61–62, R85, and 116–119; these read PHQ, DR, and LDGT.

It belongs to the tRNA methyltransferase O family.

This Archaeoglobus fulgidus (strain ATCC 49558 / DSM 4304 / JCM 9628 / NBRC 100126 / VC-16) protein is Probable S-adenosyl-L-methionine-binding protein AF_0433.